Consider the following 182-residue polypeptide: Plasmolipin (182 aa).

Positions 1 to 20 are disordered; the sequence is MAEFPSKVNTRTSSPAQGGG. Over 1–35 the chain is Cytoplasmic; that stretch reads MAEFPSKVNTRTSSPAQGGGAVVSTLSPDLGFVRS. Over residues 7 to 16 the composition is skewed to polar residues; sequence KVNTRTSSPA. The MARVEL domain occupies 32-166; sequence FVRSSLGALM…SAFLSFQAWR (135 aa). A helical membrane pass occupies residues 36-56; the sequence is SLGALMLLQLVLGLLVWALIA. Residues 57–68 lie on the Extracellular side of the membrane; sequence DTPYHLYPSYGW. Residues 69–89 traverse the membrane as a helical segment; the sequence is VMFVAVFLWLVTIIFFVLYLF. The Cytoplasmic segment spans residues 90 to 99; sequence QLHMKLYMVP. Residues 100-120 traverse the membrane as a helical segment; that stretch reads WPLVLMVFNVGATVLYITAFI. The Extracellular portion of the chain corresponds to 121–141; sequence TCSASVELTSLKGSQPYNQRA. The chain crosses the membrane as a helical span at residues 142–162; that stretch reads AASFFSCLVMIAYGVSAFLSF. Residues 163-182 lie on the Cytoplasmic side of the membrane; the sequence is QAWRGVGSNAATSQMAGGYA.

The protein belongs to the MAL family. As to quaternary structure, forms oligomers. In terms of processing, phosphorylated.

It is found in the cell membrane. The protein localises to the myelin membrane. The protein resides in the apical cell membrane. Its function is as follows. Main component of the myelin sheath that plays an important role in myelin membrane biogenesis and myelination. Plays an essential function in apical endocytosis. Regulates epithelial development through the regulation of apical endocytosis. Part of the intracellular machinery that mediates basolateral-to-apical transport of ICAM-1, an essential adhesion receptor in epithelial cells, from the subapical compartment in hepatic epithelial cells. In Bos taurus (Bovine), this protein is Plasmolipin (PLLP).